Consider the following 441-residue polypeptide: AP-2 complex subunit mu (441 aa).

The region spanning Arg174–Arg440 is the MHD domain.

It belongs to the adapter complexes medium subunit family. In terms of assembly, adapter protein complex 2 (AP-2) is a heterotetramer composed of two large adaptins (alpha-type subunit and beta-type subunits), a medium adaptin (mu-type subunit AP50) and a small adaptin (sigma-type subunit AP17). In terms of tissue distribution, brain, heart, lung, liver, testis and spleen.

It localises to the cell membrane. Its subcellular location is the membrane. It is found in the coated pit. Functionally, component of the adapter complexes which link clathrin to receptors in coated vesicles. Clathrin-associated protein complexes are believed to interact with the cytoplasmic tails of membrane proteins, leading to their selection and concentration. AP50 is a subunit of the plasma membrane adapter. Essential wnt/egl-20 signaling protein that functions in wnt/egl-20-producing cells. Required for the AP-2 complex-mediated endocytosis of membrane proteins including wntless homolog mig-14 in egl-20-producing cells. During development, regulates the migration of HSN neurons and the left and right Q neuroblasts (QL and QR, respectively) and their descendants, possibly through hox gene and wnt/egl-20 gene target mab-5, and plays a role in establishing ALM and PLM neuronal cell polarity. Regulates AWB sensory neuron cilia membrane expansion during development, potentially via localization of tub-1 and PtdIns(4,5)P2 to the ciliary base. Required for the asymmetric divisions of V5 cells. The polypeptide is AP-2 complex subunit mu (dpy-23) (Caenorhabditis elegans).